The primary structure comprises 437 residues: Probable indole-3-pyruvate monooxygenase YUCCA3 (437 aa).

Residue 41–46 (GAGPSG) participates in FAD binding. Residue 212-217 (GCGNSG) coordinates NADP(+).

It belongs to the FMO family. The cofactor is FAD.

It carries out the reaction indole-3-pyruvate + NADPH + O2 + H(+) = (indol-3-yl)acetate + CO2 + NADP(+) + H2O. Its pathway is plant hormone metabolism; auxin biosynthesis. Functionally, involved in auxin biosynthesis. Belongs to the set of redundant YUCCA genes probably responsible for auxin biosynthesis in roots. The chain is Probable indole-3-pyruvate monooxygenase YUCCA3 (YUC3) from Arabidopsis thaliana (Mouse-ear cress).